The primary structure comprises 314 residues: Ribosomal RNA small subunit methyltransferase H (314 aa).

S-adenosyl-L-methionine is bound by residues 34–36 (GGH), Asp-53, Phe-82, Asp-103, and Gln-110.

It belongs to the methyltransferase superfamily. RsmH family.

The protein resides in the cytoplasm. It carries out the reaction cytidine(1402) in 16S rRNA + S-adenosyl-L-methionine = N(4)-methylcytidine(1402) in 16S rRNA + S-adenosyl-L-homocysteine + H(+). In terms of biological role, specifically methylates the N4 position of cytidine in position 1402 (C1402) of 16S rRNA. This Levilactobacillus brevis (strain ATCC 367 / BCRC 12310 / CIP 105137 / JCM 1170 / LMG 11437 / NCIMB 947 / NCTC 947) (Lactobacillus brevis) protein is Ribosomal RNA small subunit methyltransferase H.